The sequence spans 72 residues: Alpha-elapitoxin-Djk2a (72 aa).

5 disulfide bridges follow: C3/C21, C14/C42, C27/C31, C46/C57, and C58/C63.

This sequence belongs to the three-finger toxin family. Long-chain subfamily. Type II alpha-neurotoxin sub-subfamily. In terms of tissue distribution, expressed by the venom gland.

The protein localises to the secreted. Functionally, binds with high affinity to muscular (alpha-1/CHRNA1) and neuronal (alpha-7/CHRNA7) nicotinic acetylcholine receptor (nAChR) and inhibits acetylcholine from binding to the receptor, thereby impairing neuromuscular and neuronal transmission. This chain is Alpha-elapitoxin-Djk2a, found in Dendroaspis jamesoni kaimosae (Eastern Jameson's mamba).